We begin with the raw amino-acid sequence, 213 residues long: Protein-L-isoaspartate O-methyltransferase (213 aa).

Residue S62 is part of the active site.

The protein belongs to the methyltransferase superfamily. L-isoaspartyl/D-aspartyl protein methyltransferase family.

Its subcellular location is the cytoplasm. It catalyses the reaction [protein]-L-isoaspartate + S-adenosyl-L-methionine = [protein]-L-isoaspartate alpha-methyl ester + S-adenosyl-L-homocysteine. Functionally, catalyzes the methyl esterification of L-isoaspartyl residues in peptides and proteins that result from spontaneous decomposition of normal L-aspartyl and L-asparaginyl residues. It plays a role in the repair and/or degradation of damaged proteins. In Desulfovibrio desulfuricans (strain ATCC 27774 / DSM 6949 / MB), this protein is Protein-L-isoaspartate O-methyltransferase.